The chain runs to 291 residues: Hydroxysteroid 11-beta-dehydrogenase 1-like protein B (291 aa).

Residues 1–17 (MAGVILLLLSLCVGYIA) form the signal peptide. NADP(+)-binding positions include 40-66 (GSST…TARR), 91-92 (DM), and 118-120 (NHI). Substrate is bound at residue S170. The Proton acceptor role is filled by Y183. Residues 183–187 (YCASK) and 216–222 (GYIDTEN) contribute to the NADP(+) site.

This sequence belongs to the short-chain dehydrogenases/reductases (SDR) family.

It is found in the secreted. It catalyses the reaction cortisone + NADPH + H(+) = cortisol + NADP(+). In terms of biological role, unidirectional NADP(+)-dependent cortisol dehydrogenase (in vitro). The polypeptide is Hydroxysteroid 11-beta-dehydrogenase 1-like protein B (hsd11b1l-b) (Xenopus laevis (African clawed frog)).